Here is a 488-residue protein sequence, read N- to C-terminus: Argininosuccinate lyase (488 aa).

This sequence belongs to the lyase 1 family. Argininosuccinate lyase subfamily.

The protein localises to the cytoplasm. The catalysed reaction is 2-(N(omega)-L-arginino)succinate = fumarate + L-arginine. It participates in amino-acid biosynthesis; L-arginine biosynthesis; L-arginine from L-ornithine and carbamoyl phosphate: step 3/3. In Corynebacterium jeikeium (strain K411), this protein is Argininosuccinate lyase.